Here is a 502-residue protein sequence, read N- to C-terminus: MEFSVKSGSPEKQRSACIVVGVFEPRRLSPVAEQLDKISDGYISSLLRRGDLEGKPGQMLLLHQVPGVLSERVLLVGCGKERELGERQYKEIIQKTISTLNETGSMEAVCFLTELHVKGRDTYWKVRQAVEATKDGLYTFNQFKSVKPETRRPLRKLVFNVPTRRELSLGEKAITHGLAIASGVKASKDLGNMPPNVANPAYLASQARRLADDYESVTTKIIGEQEMEKLGMTSYLAVGRGSKNESMMSIIEYKGNPDSDAKPIVLVGKGLTFDSGGISLKPGEGMDEMKYDMCGAASVFGTMKALAKLNLPINVIGVLAGCENMPGSNAYRPGDILTTMSGQTVEVLNTDAEGRLVLCDALTYVERFEPDCVVDVATLTGACVIALGHHISGVLSNHNPLAHELVNASEQSSDRAWRLPMADEYHEQLKSPFADMANIGGRPGGTITAGCFLSKFAKKYNWAHIDIAGTAWKSGAAKGSTGRPVSMLVQFLLNRSGQETEE.

Mn(2+) is bound by residues K269 and D274. The active site involves K281. Residues D292, D351, and E353 each contribute to the Mn(2+) site. Residue R355 is part of the active site.

It belongs to the peptidase M17 family. Mn(2+) is required as a cofactor.

The protein localises to the cytoplasm. It catalyses the reaction Release of an N-terminal amino acid, Xaa-|-Yaa-, in which Xaa is preferably Leu, but may be other amino acids including Pro although not Arg or Lys, and Yaa may be Pro. Amino acid amides and methyl esters are also readily hydrolyzed, but rates on arylamides are exceedingly low.. The enzyme catalyses Release of an N-terminal amino acid, preferentially leucine, but not glutamic or aspartic acids.. Functionally, presumably involved in the processing and regular turnover of intracellular proteins. Catalyzes the removal of unsubstituted N-terminal amino acids from various peptides. The chain is Probable cytosol aminopeptidase from Vibrio parahaemolyticus serotype O3:K6 (strain RIMD 2210633).